The chain runs to 113 residues: U11-theraphotoxin-Hhn1l (113 aa).

A signal peptide spans 1-21 (MNTGRVTFLVVFLVAVSLGPA). The propeptide occupies 22-74 (DKEENPMEMQEKTQQGKNYLNFGENLVVPKLEELKAKLVEKESKKSKNSRQKR). Cystine bridges form between C82–C95 and C89–C110.

The protein belongs to the neurotoxin 14 (magi-1) family. 01 (HNTX-16) subfamily. As to expression, expressed by the venom gland.

It is found in the secreted. Probable ion channel inhibitor. This chain is U11-theraphotoxin-Hhn1l, found in Cyriopagopus hainanus (Chinese bird spider).